Here is a 363-residue protein sequence, read N- to C-terminus: tRNA/tmRNA (uracil-C(5))-methyltransferase (363 aa).

5 residues coordinate S-adenosyl-L-methionine: Gln-187, Tyr-215, Asn-220, Glu-236, and Asp-296. Catalysis depends on Cys-321, which acts as the Nucleophile. Glu-355 serves as the catalytic Proton acceptor.

This sequence belongs to the class I-like SAM-binding methyltransferase superfamily. RNA M5U methyltransferase family. TrmA subfamily.

It carries out the reaction uridine(54) in tRNA + S-adenosyl-L-methionine = 5-methyluridine(54) in tRNA + S-adenosyl-L-homocysteine + H(+). The enzyme catalyses uridine(341) in tmRNA + S-adenosyl-L-methionine = 5-methyluridine(341) in tmRNA + S-adenosyl-L-homocysteine + H(+). Dual-specificity methyltransferase that catalyzes the formation of 5-methyluridine at position 54 (m5U54) in all tRNAs, and that of position 341 (m5U341) in tmRNA (transfer-mRNA). This chain is tRNA/tmRNA (uracil-C(5))-methyltransferase, found in Pseudomonas fluorescens.